The sequence spans 489 residues: Equilibrative nucleobase transporter 1 (489 aa).

A helical membrane pass occupies residues 17–37; sequence LLECLGFAGVLFGWTSLVFVF. Residue Asn-56 is glycosylated (N-linked (GlcNAc...) asparagine). 4 consecutive transmembrane segments (helical) span residues 72–92, 102–122, 123–143, and 158–180; these read LIFTLASFTINFMTFPTGYIF, LIAIFLYTSATLTIAFTSADS, AVLLFLAMPMLAVGGILFLIT, and IITMYNGAFDSSSAVFLIIKLLY. Ser-253 carries the phosphoserine modification. The residue at position 258 (Thr-258) is a Phosphothreonine. 6 helical membrane-spanning segments follow: residues 277–297, 318–338, 358–380, 402–422, 426–446, and 455–475; these read FAWHVVWLSVIQLWHYLFIGT, NAFAVTQFFGVLCAPWNGLLM, AAALRSVVPSLTLTSLLSLGFAV, SFLYGCNAAFLTLAFPSEHFG, GLVMALSAVVSLLQFPLFTLI, and LYVNLMLVLLTLLTFIHPFLV.

Belongs to the SLC43A transporter (TC 2.A.1.44) family.

The protein resides in the basolateral cell membrane. The catalysed reaction is adenine(out) = adenine(in). It catalyses the reaction guanine(out) = guanine(in). It carries out the reaction hypoxanthine(out) = hypoxanthine(in). Its function is as follows. Sodium-independent purine-selective nucleobase transporter which mediates the equilibrative transport of extracellular purine nucleobases such as adenine, guanine and hypoxanthine. May regulate fatty acid (FA) transport in adipocytes, acting as a positive regulator of FA efflux and as a negative regulator of FA uptake. The polypeptide is Equilibrative nucleobase transporter 1 (SLC43A3) (Bos taurus (Bovine)).